The chain runs to 467 residues: Probable serine hydroxymethyltransferase, cytosolic (467 aa).

Lys243 is modified (N6-(pyridoxal phosphate)lysine).

Belongs to the SHMT family. As to quaternary structure, homotetramer. Pyridoxal 5'-phosphate serves as cofactor.

The protein resides in the cytoplasm. It catalyses the reaction (6R)-5,10-methylene-5,6,7,8-tetrahydrofolate + glycine + H2O = (6S)-5,6,7,8-tetrahydrofolate + L-serine. It functions in the pathway one-carbon metabolism; tetrahydrofolate interconversion. In terms of biological role, interconversion of serine and glycine. This Schizosaccharomyces pombe (strain 972 / ATCC 24843) (Fission yeast) protein is Probable serine hydroxymethyltransferase, cytosolic.